The sequence spans 153 residues: uncharacterized protein (153 aa).

The first 22 residues, 1–22 (MKAFNKLFSLVVASVLVFSLAG), serve as a signal peptide directing secretion. A lipid anchor (N-palmitoyl cysteine) is attached at Cys23. The S-diacylglycerol cysteine moiety is linked to residue Cys23.

It to L.monocytogenes lmo0207.

Its subcellular location is the cell membrane. This is an uncharacterized protein from Escherichia coli (strain K12).